A 1226-amino-acid chain; its full sequence is Methionine synthase (1226 aa).

In terms of domain architecture, Hcy-binding spans 6-326; it reads RAQIEAQLKQ…EHIRHMAMAV (321 aa). 3 residues coordinate Zn(2+): Cys-248, Cys-311, and Cys-312. In terms of domain architecture, Pterin-binding spans 357 to 618; it reads FVNVGERTNV…VPEKLREAVE (262 aa). The 95-residue stretch at 651–745 folds into the B12-binding N-terminal domain; it reads SALEWRTWSV…FINASKQAGS (95 aa). Residues Glu-695, 757–761, His-760, Ser-805, Thr-809, and Ala-861 each bind methylcob(III)alamin; that span reads GDVHD. In terms of domain architecture, B12-binding spans 747-882; it reads NGKILLATVK…SDELRPAFVE (136 aa). The AdoMet activation domain occupies 898-1226; that stretch reads KKPRTKPVTL…EKWLGPNING (329 aa). Residues Asp-948, Arg-1136, and 1191 to 1192 contribute to the S-adenosyl-L-methionine site; that span reads YF.

This sequence belongs to the vitamin-B12 dependent methionine synthase family. The cofactor is methylcob(III)alamin. Zn(2+) is required as a cofactor.

The catalysed reaction is (6S)-5-methyl-5,6,7,8-tetrahydrofolate + L-homocysteine = (6S)-5,6,7,8-tetrahydrofolate + L-methionine. The protein operates within amino-acid biosynthesis; L-methionine biosynthesis via de novo pathway; L-methionine from L-homocysteine (MetH route): step 1/1. Its function is as follows. Catalyzes the transfer of a methyl group from methyl-cobalamin to homocysteine, yielding enzyme-bound cob(I)alamin and methionine. Subsequently, remethylates the cofactor using methyltetrahydrofolate. In Vibrio vulnificus (strain CMCP6), this protein is Methionine synthase (metH).